Reading from the N-terminus, the 407-residue chain is Multifunctional CCA protein (407 aa).

Residues Gly-8 and Arg-11 each contribute to the ATP site. Residues Gly-8 and Arg-11 each contribute to the CTP site. Mg(2+) is bound by residues Asp-21 and Asp-23. Residues Arg-91, Arg-137, and Arg-140 each contribute to the ATP site. CTP is bound by residues Arg-91, Arg-137, and Arg-140. The 102-residue stretch at 228–329 (TGVHALMALA…VALFDRVDAW (102 aa)) folds into the HD domain.

This sequence belongs to the tRNA nucleotidyltransferase/poly(A) polymerase family. Bacterial CCA-adding enzyme type 1 subfamily. As to quaternary structure, monomer. Can also form homodimers and oligomers. It depends on Mg(2+) as a cofactor. Requires Ni(2+) as cofactor.

It carries out the reaction a tRNA precursor + 2 CTP + ATP = a tRNA with a 3' CCA end + 3 diphosphate. It catalyses the reaction a tRNA with a 3' CCA end + 2 CTP + ATP = a tRNA with a 3' CCACCA end + 3 diphosphate. Its function is as follows. Catalyzes the addition and repair of the essential 3'-terminal CCA sequence in tRNAs without using a nucleic acid template. Adds these three nucleotides in the order of C, C, and A to the tRNA nucleotide-73, using CTP and ATP as substrates and producing inorganic pyrophosphate. tRNA 3'-terminal CCA addition is required both for tRNA processing and repair. Also involved in tRNA surveillance by mediating tandem CCA addition to generate a CCACCA at the 3' terminus of unstable tRNAs. While stable tRNAs receive only 3'-terminal CCA, unstable tRNAs are marked with CCACCA and rapidly degraded. The chain is Multifunctional CCA protein from Erwinia tasmaniensis (strain DSM 17950 / CFBP 7177 / CIP 109463 / NCPPB 4357 / Et1/99).